The primary structure comprises 354 residues: Ephrin-4 (354 aa).

Residues 1–22 form the signal peptide; that stretch reads MKRPLDFLLAICLILLRSSTFA. The Ephrin RBD domain occupies 23-173; that stretch reads DEHTVHWNST…SKNMRLSMKV (151 aa). The N-linked (GlcNAc...) asparagine glycan is linked to asparagine 30. 2 cysteine pairs are disulfide-bonded: cysteine 55–cysteine 92 and cysteine 80–cysteine 162. The segment at 173-196 is disordered; it reads VLSSQPTPSPSSKPARSRTDARRQ. Low complexity predominate over residues 175-186; sequence SSQPTPSPSSKP. Residue serine 335 is the site of GPI-anchor amidated serine attachment. Positions 336–354 are cleaved as a propeptide — removed in mature form; the sequence is SSSLPTFLIVFLIAVNLLF.

This sequence belongs to the ephrin family. May undergo proteolysis by metalloprotease sup-17 to give rise to a soluble form.

It is found in the cell membrane. Its function is as follows. Regulates the formation or stabilization of cell-cell contacts at several stages of epithelial morphogenesis. In early embryonic development, involved in ventral closure of the epidermis. During male tail morphogenesis, regulates precursor cell sorting together with mab-20 and allows the formation of distinct sensory rays. Probably acts as a ligand for lad-2 to regulate axon guidance of several neurons including SDQL, SDQR, SMD and PLN neurons during neurogenesis. In Caenorhabditis briggsae, this protein is Ephrin-4 (efn-4).